The primary structure comprises 565 residues: Periplasmic trehalase (565 aa).

The first 30 residues, methionine 1 to alanine 30, serve as a signal peptide directing secretion. Substrate contacts are provided by residues arginine 152, tryptophan 159–aspartate 160, asparagine 196, arginine 205–glutamine 207, arginine 277–glutamate 279, and glycine 310. Residues aspartate 312 and glutamate 496 each act as proton donor/acceptor in the active site. Glutamate 511 provides a ligand contact to substrate. The disordered stretch occupies residues proline 538 to proline 565. Positions threonine 548–proline 565 are enriched in polar residues.

This sequence belongs to the glycosyl hydrolase 37 family. In terms of assembly, monomer.

It localises to the periplasm. It carries out the reaction alpha,alpha-trehalose + H2O = alpha-D-glucose + beta-D-glucose. In terms of biological role, provides the cells with the ability to utilize trehalose at high osmolarity by splitting it into glucose molecules that can subsequently be taken up by the phosphotransferase-mediated uptake system. This is Periplasmic trehalase from Escherichia coli (strain K12 / MC4100 / BW2952).